The following is a 95-amino-acid chain: Large ribosomal subunit protein uL23 (95 aa).

This sequence belongs to the universal ribosomal protein uL23 family. Part of the 50S ribosomal subunit. Contacts protein L29, and trigger factor when it is bound to the ribosome.

One of the early assembly proteins it binds 23S rRNA. One of the proteins that surrounds the polypeptide exit tunnel on the outside of the ribosome. Forms the main docking site for trigger factor binding to the ribosome. This is Large ribosomal subunit protein uL23 from Rubrobacter xylanophilus (strain DSM 9941 / JCM 11954 / NBRC 16129 / PRD-1).